Here is a 122-residue protein sequence, read N- to C-terminus: Histone H2B, gonadal (122 aa).

The interval 1–31 (MPPKVSSKGAKKAGKAKAARSGDKKRKRRRK) is disordered. The span at 9–31 (GAKKAGKAKAARSGDKKRKRRRK) shows a compositional bias: basic residues. Residue Ser-109 is glycosylated (O-linked (GlcNAc) serine). Lys-117 is covalently cross-linked (Glycyl lysine isopeptide (Lys-Gly) (interchain with G-Cter in ubiquitin)).

Belongs to the histone H2B family. As to quaternary structure, the nucleosome is a histone octamer containing two molecules each of H2A, H2B, H3 and H4 assembled in one H3-H4 heterotetramer and two H2A-H2B heterodimers. The octamer wraps approximately 147 bp of DNA. Post-translationally, monoubiquitination of Lys-117 gives a specific tag for epigenetic transcriptional activation and is also prerequisite for histone H3 'Lys-4' and 'Lys-79' methylation. In terms of processing, glcNAcylation at Ser-109 promotes monoubiquitination of Lys-117. It fluctuates in response to extracellular glucose, and associates with transcribed genes.

It localises to the nucleus. Its subcellular location is the chromosome. Its function is as follows. Core component of nucleosome. Nucleosomes wrap and compact DNA into chromatin, limiting DNA accessibility to the cellular machineries which require DNA as a template. Histones thereby play a central role in transcription regulation, DNA repair, DNA replication and chromosomal stability. DNA accessibility is regulated via a complex set of post-translational modifications of histones, also called histone code, and nucleosome remodeling. In Patella granatina (Sandpaper limpet), this protein is Histone H2B, gonadal.